A 586-amino-acid chain; its full sequence is Protein cereblon (586 aa).

2 disordered regions span residues 1–114 (MDDE…LPRW) and 158–194 (SQERRRSRTSEETSQEDVEQPEDPPPQQPPRPPIDIG). The segment covering 14–37 (GRDEDVQLEDHSQAQGLQDRRVDA) has biased composition (basic and acidic residues). The segment covering 75 to 85 (MVEDGLQDDTA) has biased composition (acidic residues). The span at 86–96 (SEGSHPSSDMS) shows a compositional bias: polar residues. Residues 159 to 168 (QERRRSRTSE) show a composition bias toward basic and acidic residues. Acidic residues predominate over residues 170 to 179 (TSQEDVEQPE). Pro residues predominate over residues 180 to 190 (DPPPQQPPRPP). The Lon N-terminal domain occupies 226-452 (HMLIFLHQHI…LIKSTFTDES (227 aa)). In terms of domain architecture, CULT spans 451-560 (ESLFFCRYCN…LAGSSVRIGK (110 aa)). Residues C456, C459, C525, and C528 each coordinate Zn(2+).

This sequence belongs to the CRBN family. Likely a component of a DCX (DDB1-CUL4-X-box) protein ligase complex. May interact with pic/DDB1. Ubiquitinated.

It localises to the nucleus. The protein operates within protein modification; protein ubiquitination. Functionally, substrate recognition component of a DCX (DDB1-CUL4-X-box) E3 protein ligase complex that mediates the ubiquitination and subsequent proteasomal degradation of target proteins. Has an essential role in mediating growth by negatively regulating insulin signaling. It also has a role in maintaining presynaptic function in the neuromuscular junction synapses of third-instar larvae. This chain is Protein cereblon, found in Drosophila erecta (Fruit fly).